The chain runs to 465 residues: MFIYDTKSKQKVPFEPLVEKKANIYVCGPTVYDDAHLGHARSAIAFDLLRRTLELSGYEVMLVRNFTDIDDKIINKAFKENKSIQELSSVYIESYTRDLNALNVKKPSLEPKASEYLDAMVRMIETLLEKNIAYRVSNGDIYLDTTKDKDYGSLSVHNSSMEFSRIGLVQEKRLEQDFVLWKSYKGDNDVGFDSPLGKGRPGWHIECSSMVFETLALANAPYQIDIHAGGADLLFPHHENEACQTRCAFGVELAKYWMHNGFVNINNEKMSKSLGNSFFIKDALKNYDGEILRNYLLGVHYRSVLNFNEEDLLVSKKRLDKIYRLKQRVSGTLGGINPNFKKEILECMQDDLNVSKALSVLESMLSSTNEKLDQNPKNKALKGEILANLKFIEELLGIGFKDPSAYFQLGVSESEKQEIENKIEERKRAKEQKDFLKADSIREELLNHKIALMDTPQGTIWEKLF.

Residue cysteine 27 coordinates Zn(2+). Residues 29-39 (PTVYDDAHLGH) carry the 'HIGH' region motif. Zn(2+) contacts are provided by cysteine 207, histidine 237, and glutamate 241. A 'KMSKS' region motif is present at residues 269–273 (KMSKS). Residue lysine 272 coordinates ATP.

It belongs to the class-I aminoacyl-tRNA synthetase family. In terms of assembly, monomer. Zn(2+) is required as a cofactor.

The protein resides in the cytoplasm. It carries out the reaction tRNA(Cys) + L-cysteine + ATP = L-cysteinyl-tRNA(Cys) + AMP + diphosphate. The sequence is that of Cysteine--tRNA ligase from Helicobacter pylori (strain G27).